We begin with the raw amino-acid sequence, 119 residues long: Glucitol operon activator protein (119 aa).

Residues 23–29 (QISRFNR) constitute a DNA-binding region (H-T-H motif).

Functionally, positive regulator for glucitol operon expression. This is Glucitol operon activator protein (gutM) from Escherichia coli (strain K12).